Consider the following 355-residue polypeptide: Ataxin-3 (355 aa).

Residue M1 forms a Peptide (Met-Gly) (interchain with G-Cter in ubiquitin) linkage. The Josephin domain maps to 1–180 (MESIFHEKQE…DCEADQLLQM (180 aa)). The active-site Nucleophile is C14. H119 (proton acceptor) is an active-site residue. Residue N134 is part of the active site. K200 is covalently cross-linked (Glycyl lysine isopeptide (Lys-Gly) (interchain with G-Cter in ubiquitin)). 2 UIM domains span residues 224-243 (DDEDDLQRALAMSRQEIDME) and 244-263 (DEEADLRRAIQLSMQGSSRG). The segment at 257–333 (MQGSSRGMCE…AGNAMSEEDV (77 aa)) is disordered. A phosphoserine mark is found at S268, S272, and S273. Residues 279–301 (EELRKRREAYFEKQQHQQQEADR) are compositionally biased toward basic and acidic residues. Residues 312–326 (PTTSSGGLRSNQAGN) show a composition bias toward polar residues. S321 is modified (phosphoserine). The 20-residue stretch at 329–348 (SEEDVLRATVTVSLETAKDS) folds into the UIM 3 domain.

In terms of assembly, interacts with STUB1/CHIP (when monoubiquitinated). Interacts with DNA repair proteins RAD23A and RAD23B. Interacts with BECN1 (via its poly-Gln domain). Interacts with PRKN, UBR2, VCP and tubulin. Post-translationally, monoubiquitinated by UBE2W, possibly leading to activate the deubiquitinating enzyme activity. Ubiquitously expressed.

It localises to the nucleus matrix. The protein localises to the nucleus. It is found in the lysosome membrane. The catalysed reaction is Thiol-dependent hydrolysis of ester, thioester, amide, peptide and isopeptide bonds formed by the C-terminal Gly of ubiquitin (a 76-residue protein attached to proteins as an intracellular targeting signal).. Functionally, deubiquitinating enzyme involved in protein homeostasis maintenance, transcription, cytoskeleton regulation, myogenesis and degradation of misfolded chaperone substrates. Binds long polyubiquitin chains and trims them, while it has weak or no activity against chains of 4 or less ubiquitins. Involved in degradation of misfolded chaperone substrates via its interaction with STUB1/CHIP: recruited to monoubiquitinated STUB1/CHIP, and restricts the length of ubiquitin chain attached to STUB1/CHIP substrates and preventing further chain extension. Interacts with key regulators of transcription and represses transcription: acts as a histone-binding protein that regulates transcription. Acts as a negative regulator of mTORC1 signaling in response to amino acid deprivation by mediating deubiquitination of RHEB, thereby promoting RHEB inactivation by the TSC-TBC complex. Regulates autophagy via the deubiquitination of 'Lys-402' of BECN1 leading to the stabilization of BECN1. The protein is Ataxin-3 (Atxn3) of Rattus norvegicus (Rat).